A 419-amino-acid chain; its full sequence is Tryptophan synthase beta chain (419 aa).

An N6-(pyridoxal phosphate)lysine modification is found at K98.

The protein belongs to the TrpB family. As to quaternary structure, tetramer of two alpha and two beta chains. The cofactor is pyridoxal 5'-phosphate.

It catalyses the reaction (1S,2R)-1-C-(indol-3-yl)glycerol 3-phosphate + L-serine = D-glyceraldehyde 3-phosphate + L-tryptophan + H2O. Its pathway is amino-acid biosynthesis; L-tryptophan biosynthesis; L-tryptophan from chorismate: step 5/5. In terms of biological role, the beta subunit is responsible for the synthesis of L-tryptophan from indole and L-serine. This Ruegeria sp. (strain TM1040) (Silicibacter sp.) protein is Tryptophan synthase beta chain.